The following is a 592-amino-acid chain: Signal peptide peptidase-like 2B (592 aa).

The first 25 residues, 1–25 (MAAAVAAALARLLAAFLLLAAQVAC), serve as a signal peptide directing secretion. The Lumenal portion of the chain corresponds to 26–174 (EYGMVHVVSQ…APKEPVLDYN (149 aa)). Positions 71 to 149 (TASLLCSAAD…VALLSYKDML (79 aa)) constitute a PA domain. Residues Asn97 and Asn129 are each glycosylated (N-linked (GlcNAc...) asparagine). The helical transmembrane segment at 175-195 (MVIIFIMAVGTVAIGGYWAGS) threads the bilayer. Topologically, residues 196–221 (RDVKKRYMKHKRDDGPEKQEDEAVDV) are cytoplasmic. A helical membrane pass occupies residues 222-244 (TPVMTCVFVVMCCSMLVLLYYFY). The Lumenal segment spans residues 245 to 248 (DLLV). A helical transmembrane segment spans residues 249-271 (YVVIGIFCLASATGLYSCLAPCV). The Cytoplasmic segment spans residues 272-293 (RRLPFGKCRIPNNSLPYFHKRP). The helical transmembrane segment at 294-314 (QARMLLLALFCVAVSVVWGVF) threads the bilayer. At 315–319 (RNEDQ) the chain is on the lumenal side. The chain crosses the membrane as a helical span at residues 320–340 (WAWVLQDALGIAFCLYMLKTI). Residues 341 to 348 (RLPTFKAC) lie on the Cytoplasmic side of the membrane. A helical membrane pass occupies residues 349–369 (TLLLLVLFLYDIFFVFITPFL). Asp359 is an active-site residue. Over 370–412 (TKSGSSIMVEVATGPSDSATREKLPMVLKVPRLNSSPLALCDR) the chain is Lumenal. The helical transmembrane segment at 413–433 (PFSLLGFGDILVPGLLVAYCH) threads the bilayer. Residue Asp421 is part of the active site. Over 434 to 445 (RFDIQVQSSRVY) the chain is Cytoplasmic. A helical membrane pass occupies residues 446 to 466 (FVACTIAYGVGLLVTFVALAL). At 467–470 (MQRG) the chain is on the lumenal side. Residues 471-491 (QPALLYLVPCTLVTSCAVALW) traverse the membrane as a helical segment. The PAL signature appears at 472 to 474 (PAL). Topologically, residues 492–592 (RRELGVFWTG…SPVTQPGASA (101 aa)) are cytoplasmic. Positions 512-524 (PWAPAPADGPQPP) are enriched in pro residues. The disordered stretch occupies residues 512–592 (PWAPAPADGP…SPVTQPGASA (81 aa)). Positions 580–592 (AQPSPVTQPGASA) are enriched in polar residues.

It belongs to the peptidase A22B family. Monomer. Homodimer. Interacts with ITM2B. Interacts with TNF. Interacts with the simian foamy virus envelope glycoprotein gp130 and its processed leader peptide gp18LP; preferentially interacts with the leader peptide gp18LP. Post-translationally, glycosylated. Expressed predominantly in adrenal cortex and mammary gland.

Its subcellular location is the cell membrane. The protein resides in the golgi apparatus membrane. The protein localises to the lysosome membrane. It is found in the endosome membrane. It localises to the membrane. Its function is as follows. Intramembrane-cleaving aspartic protease (I-CLiP) that cleaves type II membrane signal peptides in the hydrophobic plane of the membrane. Functions in ITM2B and TNF processing. Catalyzes the intramembrane cleavage of the anchored fragment of shed TNF-alpha (TNF), which promotes the release of the intracellular domain (ICD) for signaling to the nucleus. May play a role in the regulation of innate and adaptive immunity. Catalyzes the intramembrane cleavage of the simian foamy virus processed leader peptide gp18 of the envelope glycoprotein gp130 dependently of prior ectodomain shedding by furin or furin-like proprotein convertase (PC)-mediated cleavage proteolysis. In Homo sapiens (Human), this protein is Signal peptide peptidase-like 2B.